A 428-amino-acid chain; its full sequence is Leucine-rich repeat-containing protein 42 (428 aa).

LRR repeat units lie at residues 149-170, 174-195, 202-222, 234-255, and 259-280; these read VLCS…EEIK, ELTC…LEHL, SVTQ…RKMT, NLTL…GYLF, and KLNC…KHKL. Residues 379 to 412 form a disordered region; it reads KHEAISSQESKKSKKRPFEESETEQNNSSQPSKQ. A phosphoserine mark is found at Ser-406 and Ser-407.

The protein belongs to the LRRC42 family.

The sequence is that of Leucine-rich repeat-containing protein 42 (LRRC42) from Homo sapiens (Human).